Here is a 142-residue protein sequence, read N- to C-terminus: Small ribosomal subunit protein uS9 (142 aa).

The protein belongs to the universal ribosomal protein uS9 family. Component of the small ribosomal subunit (SSU). Mature N.crassa ribosomes consist of a small (40S) and a large (60S) subunit. The 40S small subunit contains 1 molecule of ribosomal RNA (18S rRNA) and at least 32 different proteins. The large 60S subunit contains 3 rRNA molecules (26S, 5.8S and 5S rRNA) and at least 42 different proteins.

Its subcellular location is the cytoplasm. Functionally, component of the ribosome, a large ribonucleoprotein complex responsible for the synthesis of proteins in the cell. The small ribosomal subunit (SSU) binds messenger RNAs (mRNAs) and translates the encoded message by selecting cognate aminoacyl-transfer RNA (tRNA) molecules. The large subunit (LSU) contains the ribosomal catalytic site termed the peptidyl transferase center (PTC), which catalyzes the formation of peptide bonds, thereby polymerizing the amino acids delivered by tRNAs into a polypeptide chain. The nascent polypeptides leave the ribosome through a tunnel in the LSU and interact with protein factors that function in enzymatic processing, targeting, and the membrane insertion of nascent chains at the exit of the ribosomal tunnel. This is Small ribosomal subunit protein uS9 (rps-16) from Neurospora crassa (strain ATCC 24698 / 74-OR23-1A / CBS 708.71 / DSM 1257 / FGSC 987).